We begin with the raw amino-acid sequence, 384 residues long: S-adenosylmethionine synthase (384 aa).

Histidine 15 provides a ligand contact to ATP. Aspartate 17 contacts Mg(2+). A K(+)-binding site is contributed by glutamate 43. The L-methionine site is built by glutamate 56 and glutamine 99. A flexible loop region spans residues 99 to 109 (QSADINQGVDR). ATP is bound by residues 164–166 (DAK), 230–231 (RF), aspartate 239, 245–246 (RK), alanine 262, and lysine 266. Aspartate 239 lines the L-methionine pocket. Lysine 270 is an L-methionine binding site.

This sequence belongs to the AdoMet synthase family. In terms of assembly, homotetramer; dimer of dimers. It depends on Mg(2+) as a cofactor. The cofactor is K(+).

The protein resides in the cytoplasm. The enzyme catalyses L-methionine + ATP + H2O = S-adenosyl-L-methionine + phosphate + diphosphate. It functions in the pathway amino-acid biosynthesis; S-adenosyl-L-methionine biosynthesis; S-adenosyl-L-methionine from L-methionine: step 1/1. Functionally, catalyzes the formation of S-adenosylmethionine (AdoMet) from methionine and ATP. The overall synthetic reaction is composed of two sequential steps, AdoMet formation and the subsequent tripolyphosphate hydrolysis which occurs prior to release of AdoMet from the enzyme. This Haemophilus influenzae (strain ATCC 51907 / DSM 11121 / KW20 / Rd) protein is S-adenosylmethionine synthase.